Here is a 337-residue protein sequence, read N- to C-terminus: Putative 2-aminoethylphosphonate-binding periplasmic protein (337 aa).

The N-terminal stretch at 1–21 is a signal peptide; the sequence is MKLSRLALLSVFALASAPSWA.

The protein belongs to the bacterial solute-binding protein 1 family.

It is found in the periplasm. In terms of biological role, probably part of the PhnSTUV complex (TC 3.A.1.11.5) involved in 2-aminoethylphosphonate import. This Salmonella typhimurium (strain LT2 / SGSC1412 / ATCC 700720) protein is Putative 2-aminoethylphosphonate-binding periplasmic protein (phnS).